The primary structure comprises 156 residues: Small ribosomal subunit protein uS7 (156 aa).

Belongs to the universal ribosomal protein uS7 family. As to quaternary structure, part of the 30S ribosomal subunit. Contacts proteins S9 and S11.

One of the primary rRNA binding proteins, it binds directly to 16S rRNA where it nucleates assembly of the head domain of the 30S subunit. Is located at the subunit interface close to the decoding center, probably blocks exit of the E-site tRNA. The protein is Small ribosomal subunit protein uS7 of Beijerinckia indica subsp. indica (strain ATCC 9039 / DSM 1715 / NCIMB 8712).